The following is a 78-amino-acid chain: D-alanyl carrier protein (78 aa).

The Carrier domain occupies 1 to 78 (MAFRENVLEI…MIITQLEALK (78 aa)). The residue at position 36 (Ser36) is an O-(pantetheine 4'-phosphoryl)serine.

This sequence belongs to the DltC family. In terms of processing, 4'-phosphopantetheine is transferred from CoA to a specific serine of apo-DCP.

The protein localises to the cytoplasm. It functions in the pathway cell wall biogenesis; lipoteichoic acid biosynthesis. Functionally, carrier protein involved in the D-alanylation of lipoteichoic acid (LTA). The loading of thioester-linked D-alanine onto DltC is catalyzed by D-alanine--D-alanyl carrier protein ligase DltA. The DltC-carried D-alanyl group is further transferred to cell membrane phosphatidylglycerol (PG) by forming an ester bond, probably catalyzed by DltD. D-alanylation of LTA plays an important role in modulating the properties of the cell wall in Gram-positive bacteria, influencing the net charge of the cell wall. This Listeria welshimeri serovar 6b (strain ATCC 35897 / DSM 20650 / CCUG 15529 / CIP 8149 / NCTC 11857 / SLCC 5334 / V8) protein is D-alanyl carrier protein.